The sequence spans 395 residues: Putative carbonic anhydrase 1 (395 aa).

The signal sequence occupies residues 1-24 (MKLQGAGCVVAAVLGALFIVNVES). The Alpha-carbonic anhydrase domain occupies 42-365 (ISYDVRSTIG…LNDRPVFLVR (324 aa)). Zn(2+)-binding residues include H139, H141, and H165.

This sequence belongs to the alpha-carbonic anhydrase family. It depends on Zn(2+) as a cofactor. Component of the acid-insoluble and acid-soluble organic matrix of calcified layers of the shell (at protein level).

It localises to the secreted. It catalyses the reaction hydrogencarbonate + H(+) = CO2 + H2O. Reversible hydration of carbon dioxide. The sequence is that of Putative carbonic anhydrase 1 from Lottia gigantea (Giant owl limpet).